The following is a 105-amino-acid chain: N(4)-acetylcytidine amidohydrolase (105 aa).

An ASCH domain is found at 7-93; it reads TFFERFEHDI…VIAEIYPGLE (87 aa). The active-site Proton acceptor is the Lys-21. Thr-24 functions as the Nucleophile in the catalytic mechanism. Glu-74 (proton donor) is an active-site residue.

Belongs to the N(4)-acetylcytidine amidohydrolase family.

It catalyses the reaction N(4)-acetylcytidine + H2O = cytidine + acetate + H(+). The enzyme catalyses N(4)-acetyl-2'-deoxycytidine + H2O = 2'-deoxycytidine + acetate + H(+). The catalysed reaction is N(4)-acetylcytosine + H2O = cytosine + acetate + H(+). Catalyzes the hydrolysis of N(4)-acetylcytidine (ac4C). The protein is N(4)-acetylcytidine amidohydrolase of Shewanella baltica (strain OS223).